Reading from the N-terminus, the 261-residue chain is Carnitinyl-CoA dehydratase (261 aa).

The Nucleophile role is filled by E111. E131 (proton acceptor) is an active-site residue.

The protein belongs to the enoyl-CoA hydratase/isomerase family.

The catalysed reaction is (R)-carnitinyl-CoA = crotonobetainyl-CoA + H2O. It participates in amine and polyamine metabolism; carnitine metabolism. Catalyzes the reversible dehydration of L-carnitinyl-CoA to crotonobetainyl-CoA. In Proteus mirabilis (strain HI4320), this protein is Carnitinyl-CoA dehydratase.